A 74-amino-acid polypeptide reads, in one-letter code: Brevinin-2Tb (74 aa).

An N-terminal signal peptide occupies residues 1–22 (MFTMKKSLLLFFFLGTISLSLC). Residues 23 to 40 (QEERNADEDDGEMTEEEK) constitute a propeptide that is removed on maturation. Cysteines 68 and 74 form a disulfide.

The protein belongs to the frog skin active peptide (FSAP) family. Brevinin subfamily. In terms of tissue distribution, expressed by the skin glands.

The protein resides in the secreted. Antimicrobial peptide. The polypeptide is Brevinin-2Tb (Rana temporaria (European common frog)).